A 614-amino-acid chain; its full sequence is Bifunctional 3'-phosphoadenosine 5'-phosphosulfate synthase 2 (614 aa).

The interval 1-215 (MSGIKKQKTE…VVELLQEQNI (215 aa)) is adenylyl-sulfate kinase. ATP is bound at residue 52-57 (GAGKTT). Residues 79-82 (DNVR), phenylalanine 91, 96-99 (REEN), 122-123 (IS), lysine 161, and 174-175 (GF) contribute to the adenosine 5'-phosphosulfate site. Residues serine 197, 409–412 (QLRN), 511–515 (GRDPA), and alanine 553 contribute to the ATP site. A sulfate adenylyltransferase region spans residues 224–614 (IHELFVPENK…TDYYRSLEKN (391 aa)).

This sequence in the N-terminal section; belongs to the APS kinase family. In the C-terminal section; belongs to the sulfate adenylyltransferase family. As to expression, expressed in cartilage and adrenal gland.

It catalyses the reaction sulfate + ATP + H(+) = adenosine 5'-phosphosulfate + diphosphate. It carries out the reaction adenosine 5'-phosphosulfate + ATP = 3'-phosphoadenylyl sulfate + ADP + H(+). It participates in sulfur metabolism; sulfate assimilation. Its function is as follows. Bifunctional enzyme with both ATP sulfurylase and APS kinase activity, which mediates two steps in the sulfate activation pathway. The first step is the transfer of a sulfate group to ATP to yield adenosine 5'-phosphosulfate (APS), and the second step is the transfer of a phosphate group from ATP to APS yielding 3'-phosphoadenylylsulfate/PAPS, the activated sulfate donor used by sulfotransferases. In mammals, PAPS is the sole source of sulfate while APS appears to only be an intermediate in the sulfate-activation pathway. Plays indirectly an important role in skeletogenesis during postnatal growth. The sequence is that of Bifunctional 3'-phosphoadenosine 5'-phosphosulfate synthase 2 (PAPSS2) from Homo sapiens (Human).